Reading from the N-terminus, the 342-residue chain is tRNA-specific 2-thiouridylase MnmA (342 aa).

Residues Leu-6 to Ser-13 and Leu-32 contribute to the ATP site. Residue Cys-92 is the Nucleophile of the active site. Cysteines 92 and 191 form a disulfide. Gly-116 contacts ATP. Positions Lys-138 to Gln-140 are interaction with tRNA. The active-site Cysteine persulfide intermediate is the Cys-191. The interaction with tRNA stretch occupies residues Arg-293 to Tyr-294.

It belongs to the MnmA/TRMU family.

Its subcellular location is the cytoplasm. The enzyme catalyses S-sulfanyl-L-cysteinyl-[protein] + uridine(34) in tRNA + AH2 + ATP = 2-thiouridine(34) in tRNA + L-cysteinyl-[protein] + A + AMP + diphosphate + H(+). Its function is as follows. Catalyzes the 2-thiolation of uridine at the wobble position (U34) of tRNA, leading to the formation of s(2)U34. This Helicobacter pylori (strain G27) protein is tRNA-specific 2-thiouridylase MnmA.